The chain runs to 292 residues: 33 kDa chaperonin (292 aa).

Intrachain disulfides connect Cys-230–Cys-232 and Cys-263–Cys-266.

It belongs to the HSP33 family. Post-translationally, under oxidizing conditions two disulfide bonds are formed involving the reactive cysteines. Under reducing conditions zinc is bound to the reactive cysteines and the protein is inactive.

The protein localises to the cytoplasm. In terms of biological role, redox regulated molecular chaperone. Protects both thermally unfolding and oxidatively damaged proteins from irreversible aggregation. Plays an important role in the bacterial defense system toward oxidative stress. The protein is 33 kDa chaperonin of Sodalis glossinidius (strain morsitans).